Consider the following 407-residue polypeptide: Phosphoglycerate kinase (407 aa).

Substrate is bound by residues 27–29 (DLN), Arg-43, 66–69 (HLGR), Arg-125, and Arg-165. ATP contacts are provided by residues Lys-215, Gly-303, Glu-334, and 363 to 366 (GGDS).

Belongs to the phosphoglycerate kinase family. Monomer.

The protein localises to the cytoplasm. It carries out the reaction (2R)-3-phosphoglycerate + ATP = (2R)-3-phospho-glyceroyl phosphate + ADP. Its pathway is carbohydrate degradation; glycolysis; pyruvate from D-glyceraldehyde 3-phosphate: step 2/5. The polypeptide is Phosphoglycerate kinase (Mycobacterium sp. (strain JLS)).